Consider the following 811-residue polypeptide: Glycerol-3-phosphate acyltransferase (811 aa).

The HXXXXD motif motif lies at 308–313; the sequence is CHRSHM.

This sequence belongs to the GPAT/DAPAT family.

The protein localises to the cell inner membrane. The enzyme catalyses sn-glycerol 3-phosphate + an acyl-CoA = a 1-acyl-sn-glycero-3-phosphate + CoA. The protein operates within phospholipid metabolism; CDP-diacylglycerol biosynthesis; CDP-diacylglycerol from sn-glycerol 3-phosphate: step 1/3. This is Glycerol-3-phosphate acyltransferase from Pseudoalteromonas atlantica (strain T6c / ATCC BAA-1087).